A 578-amino-acid polypeptide reads, in one-letter code: Isocitrate dehydrogenase kinase/phosphatase (578 aa).

Residues 315 to 321 and K336 each bind ATP; that span reads APGIRGM. The active site involves D371.

This sequence belongs to the AceK family.

It is found in the cytoplasm. The catalysed reaction is L-seryl-[isocitrate dehydrogenase] + ATP = O-phospho-L-seryl-[isocitrate dehydrogenase] + ADP + H(+). In terms of biological role, bifunctional enzyme which can phosphorylate or dephosphorylate isocitrate dehydrogenase (IDH) on a specific serine residue. This is a regulatory mechanism which enables bacteria to bypass the Krebs cycle via the glyoxylate shunt in response to the source of carbon. When bacteria are grown on glucose, IDH is fully active and unphosphorylated, but when grown on acetate or ethanol, the activity of IDH declines drastically concomitant with its phosphorylation. This is Isocitrate dehydrogenase kinase/phosphatase from Escherichia coli O17:K52:H18 (strain UMN026 / ExPEC).